The primary structure comprises 331 residues: MIIENNKKKALEKALDKIEKQFGKGSIMTLGENRSMDIETISTGSLSLDIALGTGGLPMGRIVEIYGPESSGKTTLTLEVIYEAQKKGKICAFIDAEHALDPIYAKNLGVDINNLLCSQPDNGEQALEICDSLTRSGAVDLIIVDSVAALTPKAEIDGEIGDLHLGLAARMMSQAMRKLAGNLKNANTLLIFINQIRVKIGTIFGSPEVTTGGNALKFYASVRLDIRKIGTIKDGDIIIGNETRVKVVKNKISAPFRQAEFQILYGNGINTEGELITLGVNHNIIEKSGSWYSYNKNKIGQGKNNACNFLKNNPNISKEISRKIREINLIK.

67–74 (GPESSGKT) is an ATP binding site.

This sequence belongs to the RecA family.

Its subcellular location is the cytoplasm. Its function is as follows. Can catalyze the hydrolysis of ATP in the presence of single-stranded DNA, the ATP-dependent uptake of single-stranded DNA by duplex DNA, and the ATP-dependent hybridization of homologous single-stranded DNAs. It interacts with LexA causing its activation and leading to its autocatalytic cleavage. This chain is Protein RecA, found in Wigglesworthia glossinidia brevipalpis.